The sequence spans 428 residues: Cell division protein DamX (428 aa).

Residues 1 to 99 (MDEFKPEDEL…KRKKAASKPA (99 aa)) form a disordered region. Residues 1–103 (MDEFKPEDEL…AASKPASRQY (103 aa)) lie on the Cytoplasmic side of the membrane. Composition is skewed to basic and acidic residues over residues 7 to 36 (EDEL…ERGE) and 50 to 64 (DDRR…RNEE). Positions 55–87 (TRAQKERNEEPEIEEEIDESEDETVDEERVERR) form a coiled coil. A compositionally biased stretch (acidic residues) spans 65–82 (PEIEEEIDESEDETVDEE). The segment covering 86–95 (RRPRKRKKAA) has biased composition (basic residues). The helical transmembrane segment at 104–124 (MMMGVGILVLLLLIIGIGSAL) threads the bilayer. Residues 125-428 (KAPSTTSSDQ…PLRQVQADLK (304 aa)) lie on the Periplasmic side of the membrane. Disordered stretches follow at residues 149–190 (TDQA…VATD) and 226–344 (EPAT…KSAP). Positions 236-257 (GNASRDTAKTQTAERPSTTRPA) are enriched in polar residues. Positions 288-334 (PAAPVASTKAPAATSTPAPKETATTAPVQTASPAQTTATPAAGAKTA) are enriched in low complexity. One can recognise an SPOR domain in the interval 342–419 (SAPSSHYTLQ…VQAKNPWAKP (78 aa)).

The protein belongs to the DamX family. Interacts in vitro with multiple Fts proteins, including FtsQ and FtsN.

The protein localises to the cell inner membrane. Non-essential cell division protein. The protein is Cell division protein DamX of Escherichia coli (strain K12).